The primary structure comprises 403 residues: Arginine deiminase (403 aa).

Cysteine 388 (amidino-cysteine intermediate) is an active-site residue.

This sequence belongs to the arginine deiminase family.

It is found in the cytoplasm. It carries out the reaction L-arginine + H2O = L-citrulline + NH4(+). The protein operates within amino-acid degradation; L-arginine degradation via ADI pathway; carbamoyl phosphate from L-arginine: step 1/2. This Mycoplasma capricolum subsp. capricolum (strain California kid / ATCC 27343 / NCTC 10154) protein is Arginine deiminase.